A 227-amino-acid polypeptide reads, in one-letter code: CDP-diacylglycerol--glycerol-3-phosphate 3-phosphatidyltransferase (227 aa).

Helical transmembrane passes span 30 to 50 (IFIA…GSVA), 58 to 78 (VTIH…TAVI), 112 to 132 (VLIA…VIVL), 159 to 179 (WKTT…SFSL), and 192 to 212 (WAIV…SFGI).

The protein belongs to the CDP-alcohol phosphatidyltransferase class-I family.

It localises to the cell membrane. The enzyme catalyses a CDP-1,2-diacyl-sn-glycerol + sn-glycerol 3-phosphate = a 1,2-diacyl-sn-glycero-3-phospho-(1'-sn-glycero-3'-phosphate) + CMP + H(+). It participates in phospholipid metabolism; phosphatidylglycerol biosynthesis; phosphatidylglycerol from CDP-diacylglycerol: step 1/2. In terms of biological role, this protein catalyzes the committed step to the synthesis of the acidic phospholipids. The polypeptide is CDP-diacylglycerol--glycerol-3-phosphate 3-phosphatidyltransferase (pgsA) (Mycoplasma pneumoniae (strain ATCC 29342 / M129 / Subtype 1) (Mycoplasmoides pneumoniae)).